We begin with the raw amino-acid sequence, 622 residues long: Probable potassium transport system protein Kup 2 (622 aa).

The next 12 membrane-spanning stretches (helical) occupy residues 9–29, 46–66, 99–119, 137–157, 169–189, 213–233, 247–267, 285–305, 337–357, 363–383, 396–416, and 419–439; these read LSGV…TSPL, PASI…VVSV, TPLL…EVVI, PSLD…LFAI, FAPI…NSIF, ASFF…ALYA, WFMV…ALLL, ALLP…QAVI, IYIP…IMSF, LAAA…ILSC, LVAA…AANL, and IFSG…VMTS.

Belongs to the HAK/KUP transporter (TC 2.A.72) family.

The protein localises to the cell inner membrane. The enzyme catalyses K(+)(in) + H(+)(in) = K(+)(out) + H(+)(out). Functionally, transport of potassium into the cell. Likely operates as a K(+):H(+) symporter. This Aeromonas hydrophila subsp. hydrophila (strain ATCC 7966 / DSM 30187 / BCRC 13018 / CCUG 14551 / JCM 1027 / KCTC 2358 / NCIMB 9240 / NCTC 8049) protein is Probable potassium transport system protein Kup 2.